A 245-amino-acid chain; its full sequence is Acetylglutamate kinase (245 aa).

Substrate contacts are provided by residues 41 to 42 (GG), Arg63, and Asn156.

This sequence belongs to the acetylglutamate kinase family. ArgB subfamily.

The protein localises to the cytoplasm. It carries out the reaction N-acetyl-L-glutamate + ATP = N-acetyl-L-glutamyl 5-phosphate + ADP. It functions in the pathway amino-acid biosynthesis; L-arginine biosynthesis; N(2)-acetyl-L-ornithine from L-glutamate: step 2/4. Catalyzes the ATP-dependent phosphorylation of N-acetyl-L-glutamate. This chain is Acetylglutamate kinase, found in Streptococcus sanguinis (strain SK36).